We begin with the raw amino-acid sequence, 186 residues long: Imidazoleglycerol-phosphate dehydratase (186 aa).

It belongs to the imidazoleglycerol-phosphate dehydratase family.

It localises to the cytoplasm. The catalysed reaction is D-erythro-1-(imidazol-4-yl)glycerol 3-phosphate = 3-(imidazol-4-yl)-2-oxopropyl phosphate + H2O. The protein operates within amino-acid biosynthesis; L-histidine biosynthesis; L-histidine from 5-phospho-alpha-D-ribose 1-diphosphate: step 6/9. The sequence is that of Imidazoleglycerol-phosphate dehydratase from Pyrobaculum aerophilum (strain ATCC 51768 / DSM 7523 / JCM 9630 / CIP 104966 / NBRC 100827 / IM2).